The chain runs to 177 residues: MSRVAKNPVKLPAGVEVKFAGQQLSVKGAKGTLELNVHSSVEVTEESGELRFVARNGDQQARAMAGTTRALVNNMVQGVSQGFERKLQLVGVGYKAQAKGTVLNLALGFSHPVDYELPAGITAETPSQTDILIKGIDKQLVGQVAAEIRDFRPPEPYKGKGVRYADEVVRRKEAKKK.

The protein belongs to the universal ribosomal protein uL6 family. As to quaternary structure, part of the 50S ribosomal subunit.

In terms of biological role, this protein binds to the 23S rRNA, and is important in its secondary structure. It is located near the subunit interface in the base of the L7/L12 stalk, and near the tRNA binding site of the peptidyltransferase center. This is Large ribosomal subunit protein uL6 from Pseudomonas putida (strain W619).